A 367-amino-acid chain; its full sequence is Ribosomal lysine N-methyltransferase 5 (367 aa).

The interval 55-74 (EGGRKKKRVRRRNKASSVEE) is disordered. Residues 58–68 (RKKKRVRRRNK) show a composition bias toward basic residues. Residues tryptophan 110, 170–172 (GAG), aspartate 192, tryptophan 256, and methionine 288 contribute to the S-adenosyl-L-methionine site.

It belongs to the class I-like SAM-binding methyltransferase superfamily. RKM5 family.

Functionally, S-adenosyl-L-methionine-dependent protein-lysine N-methyltransferase that monomethylates 60S ribosomal protein L1 (RPL1A and RPL1B) at 'Lys-46'. The chain is Ribosomal lysine N-methyltransferase 5 (RKM5) from Saccharomyces cerevisiae (strain RM11-1a) (Baker's yeast).